The chain runs to 191 residues: MSLVLVAVLALLGLCLIAGAILGFAAVRFKVEGDPIAEQINALLPQTQCGQCGYPGCKPYAEAIAGGDKINKCPPGGEATIQALADLLDVEPEPLDAVEGEKPQMVAFIREAECIGCTKCIQACPVDAIVGAARQMHTVIVSECTGCDLCVEPCPVDCIDMIEVGSTVQSWKWDKPLAPGQLIASDREQAA.

The tract at residues 1–26 is hydrophobic; the sequence is MSLVLVAVLALLGLCLIAGAILGFAA. Residues 32 to 90 form the 4Fe-4S domain; it reads EGDPIAEQINALLPQTQCGQCGYPGCKPYAEAIAGGDKINKCPPGGEATIQALADLLDV. Residues cysteine 49, cysteine 52, cysteine 57, cysteine 73, cysteine 114, cysteine 117, cysteine 120, cysteine 124, cysteine 144, cysteine 147, cysteine 150, and cysteine 154 each contribute to the [4Fe-4S] cluster site. 4Fe-4S ferredoxin-type domains are found at residues 105–134 and 135–164; these read MVAF…GAAR and QMHT…MIEV.

This sequence belongs to the 4Fe4S bacterial-type ferredoxin family. RnfB subfamily. In terms of assembly, the complex is composed of six subunits: RnfA, RnfB, RnfC, RnfD, RnfE and RnfG. The cofactor is [4Fe-4S] cluster.

It is found in the cell inner membrane. Its function is as follows. Part of a membrane-bound complex that couples electron transfer with translocation of ions across the membrane. The protein is Ion-translocating oxidoreductase complex subunit B of Ectopseudomonas mendocina (strain ymp) (Pseudomonas mendocina).